A 710-amino-acid polypeptide reads, in one-letter code: Solute carrier organic anion transporter family member 3A1 (710 aa).

M1 carries the N-acetylmethionine modification. Gly residues predominate over residues 1 to 15 (MQGKKPGGSSGGGRS). Residues 1-25 (MQGKKPGGSSGGGRSGELQGDEAQR) are disordered. At 1–40 (MQGKKPGGSSGGGRSGELQGDEAQRNKKKKKKVSCFSNIK) the chain is on the cytoplasmic side. Residues 41–60 (IFLVSECALMLAQGTVGAYL) traverse the membrane as a helical segment. Over 61-79 (VSVLTTLERRFNLQSADVG) the chain is Extracellular. Residues 80–100 (VIASSFEIGNLALILFVSYFG) traverse the membrane as a helical segment. Over 101 to 106 (ARGHRP) the chain is Cytoplasmic. Residues 107–131 (RLIGCGGIVMALGALLSALPEFLTH) traverse the membrane as a helical segment. Topologically, residues 132 to 174 (QYKYEAGEIRWGAEGRDVCATNGSSSDEGPDPDLICRNRTATN) are extracellular. N153 and N169 each carry an N-linked (GlcNAc...) asparagine glycan. Residues 175–203 (MMYLLLIGAQVLLGIGATPVQPLGVSYID) form a helical membrane-spanning segment. Residues 204 to 222 (DHVRRKDSSLYIGILFTML) are Cytoplasmic-facing. The helical transmembrane segment at 223-243 (VFGPACGFILGSFCTKIYVDA) threads the bilayer. At 244–261 (VFIDTSNLDITPDDPRWI) the chain is on the extracellular side. The chain crosses the membrane as a helical span at residues 262 to 286 (GAWWGGFLLCGALLFFSSLLMFGFP). Residues 287-344 (QSLPPHSEPGMESEQAMLPEREYERPKPSNGVLRHPLEPDSSASCFQQLRVIPKVTKH) lie on the Cytoplasmic side of the membrane. Residues 345–366 (LLSNPVFTCIVLAACMEIAVVA) form a helical membrane-spanning segment. Residues 367 to 386 (GFAAFLGKYLEQQFNLTTSS) lie on the Extracellular side of the membrane. An N-linked (GlcNAc...) asparagine glycan is attached at N381. Residues 387–410 (ANQLLGMTAIPCACLGIFLGGLLV) form a helical membrane-spanning segment. Residues 411-414 (KKLS) are Cytoplasmic-facing. The helical transmembrane segment at 415 to 438 (LSALGAIRMAMLVNLVSTACYVSF) threads the bilayer. The Extracellular portion of the chain corresponds to 439–539 (LFLGCDTVPV…PGCQEAFLTF (101 aa)). N457 carries an N-linked (GlcNAc...) asparagine glycan. The region spanning 465–513 (LDPYSPCNNNCECQTDSFTPVCGADGITYLSACFAGCNSTNLTGCACLT) is the Kazal-like domain. 3 disulfide bridges follow: C471/C501, C477/C497, and C486/C511. N-linked (GlcNAc...) asparagine glycans are attached at residues N502, N505, and N519. A helical transmembrane segment spans residues 540 to 562 (LCVMCVCSLIGAMAQTPSVIILI). The Cytoplasmic portion of the chain corresponds to 563 to 571 (RTVSPELKS). A helical membrane pass occupies residues 572-597 (YALGVLFLLLRLLGFIPPPLIFGAGI). Over 598 to 630 (DSTCLFWSTFCGEQGACVLYDNVVYRYLYVSIA) the chain is Extracellular. Residues 631–648 (IALKSFAFILYTTTWQCL) form a helical membrane-spanning segment. The Cytoplasmic portion of the chain corresponds to 649–705 (RKNYKRYIKNHEGGLSTSEFLASTLTLDNLGRDPVPAHQTHRTKFIYNLEDHEWCEN).

The protein belongs to the organo anion transporter (TC 2.A.60) family. As to expression, expressed in many brain regions, including frontal cortex, brain stem and cerebellum. Associated with neuronal bodies in a punctated matter. Detected at the arcuate nucleus and the choroid plexus (at protein level). Little expression, if any, in oligodendrocytes. In the cardiovascular system, detected in cardiac muscle cells and endothelial cells of aorta, coronary artery and left ventricular endocardium (at protein level). In the respiratory system, detected in alveolar epithelial cells and in mucosal epithelium of the trachea (at protein level). In the reproductive system, detected in spermatozoa, oocytes, smooth muscle cells of the ovary, epithelium of the glandula uterine, smooth muscle cells of the myometrium and epithelium of the endometrium (at protein level). In the kidney, detected in afferent and efferent arterioles, and the epithelium of distal tubules and collecting tubules (at protein level).

Its subcellular location is the basolateral cell membrane. It is found in the apical cell membrane. It localises to the basal cell membrane. The enzyme catalyses L-thyroxine(out) = L-thyroxine(in). The catalysed reaction is prostaglandin E1(out) = prostaglandin E1(in). It carries out the reaction prostaglandin E2(out) = prostaglandin E2(in). It catalyses the reaction prostaglandin F2alpha(out) = prostaglandin F2alpha(in). The enzyme catalyses (5Z,8Z,11Z,14Z)-eicosatetraenoate(out) = (5Z,8Z,11Z,14Z)-eicosatetraenoate(in). The catalysed reaction is taurocholate(out) = taurocholate(in). It carries out the reaction glycocholate(out) = glycocholate(in). It catalyses the reaction estrone 3-sulfate(out) = estrone 3-sulfate(in). The enzyme catalyses argipressin(out) = argipressin(in). Its function is as follows. Putative organic anion antiporter with apparent broad substrate specificity. Recognizes various substrates including thyroid hormone L-thyroxine, prostanoids such as prostaglandin E1 and E2, bile acids such as taurocholate, glycolate and glycochenodeoxycholate and peptide hormones such as L-arginine vasopressin, likely operating in a tissue-specific manner. The transport mechanism, its electrogenicity and potential tissue-specific counterions remain to be elucidated. The chain is Solute carrier organic anion transporter family member 3A1 (Slco3a1) from Rattus norvegicus (Rat).